The chain runs to 648 residues: Shugoshin (648 aa).

Coiled coils occupy residues 95–122 (LMIK…RLSV) and 208–273 (DDRA…KDEA). Disordered stretches follow at residues 188–239 (KVVG…RSSR), 262–334 (EADK…QEDA), 367–443 (VYRD…RPRR), 483–518 (TNRK…AAED), and 628–648 (HRAR…KVST). Basic and acidic residues-rich tracts occupy residues 200 to 217 (VRGE…HQEA) and 262 to 273 (EADKSRSAKDEA). A compositionally biased stretch (polar residues) spans 306–315 (ASGTLTQSNE). Basic and acidic residues-rich tracts occupy residues 424-440 (IVVD…DATR) and 490-509 (QREG…HEQD).

The protein belongs to the shugoshin family.

It localises to the nucleus. It is found in the chromosome. The protein resides in the centromere. Its function is as follows. Plays a central role in chromosome cohesion during cell division by preventing premature dissociation of cohesin complex from centromeres after prophase, when most of cohesin complex dissociates from chromosomes arms. May act by protecting RAD21 and or REC8 from cleavage by ESP1/separase. In Eremothecium gossypii (strain ATCC 10895 / CBS 109.51 / FGSC 9923 / NRRL Y-1056) (Yeast), this protein is Shugoshin (SGO1).